A 98-amino-acid chain; its full sequence is Integration host factor subunit alpha (98 aa).

This sequence belongs to the bacterial histone-like protein family. Heterodimer of an alpha and a beta chain.

Its function is as follows. This protein is one of the two subunits of integration host factor, a specific DNA-binding protein that functions in genetic recombination as well as in transcriptional and translational control. The polypeptide is Integration host factor subunit alpha (Glaesserella parasuis serovar 5 (strain SH0165) (Haemophilus parasuis)).